The primary structure comprises 542 residues: MAKEIKFSEDARSAMLSGVDKLADTVKTTMGPKGRNVVLEQSYGTPTITNDGVTIAKSIELENQFENMGAKLVAEVASKTNDIAGDGTTTATVLTQAIVNAGMKNVTSGANPVGIRRGIDKATEVAVEALKKMSHDVKTKDDIEQIASISAANPEVGKLIADAMEKVGHDGVITIEDSRGVDTSVDVVEGMSFDRGYMSQYMVTDNDKMEADLDNPYILITDKKISNIQDILPLLQSVVQEGRALLIIADDITGEALPTLVLNKIRGTFNVVSVKAPGFGDRRKAQLQDIAVLTGGTVISDDLGMSLKDATVDQLGQANKVTVTKDTTTIVDGAGSKEAIQERVDQIKQEIAKSTSDFDKEKLQERLAKLSGGVAVVKVGAATETELKEKKYRIEDALNATRAAVQEGFVPGGGTALINVIPALDKIEADGDELTGINIVKAALEAPVRQIAENAGVEGSVIVNELKNEKEGIGYNAADGKFEDMIKAGIVDPTMVTRSALQNAASVSALLLTTEAVVADKPDPNANNQAPAAPQGGMGGMM.

Residues 29–32, 86–90, glycine 413, 476–478, and aspartate 492 contribute to the ATP site; these read TMGP, DGTTT, and NAA. The segment at 521–542 is disordered; sequence KPDPNANNQAPAAPQGGMGGMM. The segment covering 524–535 has biased composition (low complexity); that stretch reads PNANNQAPAAPQ.

The protein belongs to the chaperonin (HSP60) family. As to quaternary structure, forms a cylinder of 14 subunits composed of two heptameric rings stacked back-to-back. Interacts with the co-chaperonin GroES.

It localises to the cytoplasm. The enzyme catalyses ATP + H2O + a folded polypeptide = ADP + phosphate + an unfolded polypeptide.. In terms of biological role, together with its co-chaperonin GroES, plays an essential role in assisting protein folding. The GroEL-GroES system forms a nano-cage that allows encapsulation of the non-native substrate proteins and provides a physical environment optimized to promote and accelerate protein folding. This chain is Chaperonin GroEL, found in Limosilactobacillus reuteri subsp. reuteri (strain JCM 1112) (Lactobacillus reuteri).